The chain runs to 485 residues: MSLFDHSVSELHKKLNNKEISVTDLVEESYKRIADVEDNVKAFLTLDEENARAKAKELDAKIGAEDNGLLFGMPIGVKDNIVTNGLRTTCASKILANFDPIYDATVVQKLKAADTITIGKLNMDEFAMGSSNENSGFYATKNPWNLDYVPGGSSGGSAAAVAAGEVLFSLGSDTGGSIRQPAAYCGVVGLKPTYGRVSRYGLVAFASSLDQIGPITRTVEDNAYLLQAISGLDRMDATSANVEVGNYLAGLTGDVKGLRIAVPKEYLGEGVGEEARESVLAALKVLEGMGATWEEVSLPHSKYALATYYLLSSSEASANLSRFDGVRYGVRSDNVNNLLDLYKNTRSEGFGDEVKRRIMLGTFALSSGYYDAYYKKAQQVRTLIKNDFENVFANYDVIIGPTTPTPAFKVGEKVDDPMTMYANDILTIPVNLAGVPAISVPCGFGANNMPLGLQIIGKHFDEATIYRVAHAFEQATDYHTKKASL.

Active-site charge relay system residues include lysine 78 and serine 153. The active-site Acyl-ester intermediate is serine 177.

This sequence belongs to the amidase family. GatA subfamily. As to quaternary structure, heterotrimer of A, B and C subunits.

It carries out the reaction L-glutamyl-tRNA(Gln) + L-glutamine + ATP + H2O = L-glutaminyl-tRNA(Gln) + L-glutamate + ADP + phosphate + H(+). Functionally, allows the formation of correctly charged Gln-tRNA(Gln) through the transamidation of misacylated Glu-tRNA(Gln) in organisms which lack glutaminyl-tRNA synthetase. The reaction takes place in the presence of glutamine and ATP through an activated gamma-phospho-Glu-tRNA(Gln). The chain is Glutamyl-tRNA(Gln) amidotransferase subunit A from Bacillus cereus (strain 03BB102).